Consider the following 432-residue polypeptide: Glutamyl-tRNA reductase (432 aa).

Substrate contacts are provided by residues 55-58 (TCNR), Ser114, 119-121 (ETQ), and Gln125. The Nucleophile role is filled by Cys56. 194 to 199 (GAGEMI) serves as a coordination point for NADP(+).

This sequence belongs to the glutamyl-tRNA reductase family. As to quaternary structure, homodimer.

The enzyme catalyses (S)-4-amino-5-oxopentanoate + tRNA(Glu) + NADP(+) = L-glutamyl-tRNA(Glu) + NADPH + H(+). It functions in the pathway porphyrin-containing compound metabolism; protoporphyrin-IX biosynthesis; 5-aminolevulinate from L-glutamyl-tRNA(Glu): step 1/2. Its function is as follows. Catalyzes the NADPH-dependent reduction of glutamyl-tRNA(Glu) to glutamate 1-semialdehyde (GSA). The protein is Glutamyl-tRNA reductase of Burkholderia orbicola (strain AU 1054).